A 245-amino-acid chain; its full sequence is 3-deoxy-manno-octulosonate cytidylyltransferase (245 aa).

The protein belongs to the KdsB family.

The protein localises to the cytoplasm. It carries out the reaction 3-deoxy-alpha-D-manno-oct-2-ulosonate + CTP = CMP-3-deoxy-beta-D-manno-octulosonate + diphosphate. It functions in the pathway nucleotide-sugar biosynthesis; CMP-3-deoxy-D-manno-octulosonate biosynthesis; CMP-3-deoxy-D-manno-octulosonate from 3-deoxy-D-manno-octulosonate and CTP: step 1/1. Its pathway is bacterial outer membrane biogenesis; lipopolysaccharide biosynthesis. In terms of biological role, activates KDO (a required 8-carbon sugar) for incorporation into bacterial lipopolysaccharide in Gram-negative bacteria. In Acidobacterium capsulatum (strain ATCC 51196 / DSM 11244 / BCRC 80197 / JCM 7670 / NBRC 15755 / NCIMB 13165 / 161), this protein is 3-deoxy-manno-octulosonate cytidylyltransferase.